The chain runs to 471 residues: Abscission/NoCut checkpoint regulator (471 aa).

A disordered region spans residues 39 to 64 (GGAGQGREGRSWGEGPRGPGLGRRDL). The FYVE-type zinc finger occupies 74-133 (ATMESRCYGCAVKFTLFKKEYGCKNCGRAFCSGCLSFSAAVPRTGNTQQKVCKQCHEVLT). Positions 80, 83, 96, 99, 104, 107, 125, and 128 each coordinate Zn(2+). The residue at position 144 (Ser144) is a Phosphoserine. The MIM1-A signature appears at 174–187 (DQMIAERLARLRQE). Lys207 participates in a covalent cross-link: Glycyl lysine isopeptide (Lys-Gly) (interchain with G-Cter in SUMO2). Thr243 is modified (phosphothreonine). The disordered stretch occupies residues 271 to 299 (KGGGPAASLQNDLNQGGPGSTNSKRQANW). The segment covering 278–299 (SLQNDLNQGGPGSTNSKRQANW) has biased composition (polar residues). 2 positions are modified to phosphoserine: Gly286 and Ser293. The stretch at 311 to 375 (EAALELREEN…RVLQQLTEEA (65 aa)) forms a coiled coil. Positions 326–339 (ILALAKRLAMLRGQ) match the MIM1-B motif. A Phosphoserine modification is found at Ser354. Residues 386-412 (PAEQASRPWTQPRGAEPEAQDVDPRPE) form a disordered region. Ser463 is subject to Phosphoserine.

As to quaternary structure, interacts (via MIM1-B) with VPS4A; interaction takes place at the midbody ring following cytokinesis checkpoint activation. Phosphorylated in vitro at Ser-22 by AURKB; however, phosphorylation at this site could not be confirmed in vivo. As to expression, detected in brain, heart, skeletal muscle and kidney. Expressed in the liver (at protein level).

Its subcellular location is the cytoplasm. It localises to the cytoskeleton. It is found in the microtubule organizing center. The protein localises to the centrosome. The protein resides in the cleavage furrow. Its subcellular location is the midbody. It localises to the midbody ring. Its function is as follows. Key regulator of abscission step in cytokinesis: part of the cytokinesis checkpoint, a process required to delay abscission to prevent both premature resolution of intercellular chromosome bridges and accumulation of DNA damage. Together with CHMP4C, required to retain abscission-competent VPS4 (VPS4A and/or VPS4B) at the midbody ring until abscission checkpoint signaling is terminated at late cytokinesis. Deactivation of AURKB results in dephosphorylation of CHMP4C followed by its dissociation from ZFYVE19/ANCHR and VPS4 and subsequent abscission. The sequence is that of Abscission/NoCut checkpoint regulator (ZFYVE19) from Homo sapiens (Human).